The chain runs to 172 residues: Glutamyl-tRNA(Gln) amidotransferase subunit C-3, mitochondrial (172 aa).

The interval 49-71 (KHPSKVPQRPNKSTIDGQSTPTR) is disordered. A compositionally biased stretch (polar residues) spans 58–71 (PNKSTIDGQSTPTR).

This sequence belongs to the GatC family. Subunit of the heterotrimeric GatCAB amidotransferase (AdT) complex, composed of A, B and C subunits.

Its subcellular location is the mitochondrion. The catalysed reaction is L-glutamyl-tRNA(Gln) + L-glutamine + ATP + H2O = L-glutaminyl-tRNA(Gln) + L-glutamate + ADP + phosphate + H(+). Allows the formation of correctly charged Gln-tRNA(Gln) through the transamidation of misacylated Glu-tRNA(Gln) in the mitochondria. The reaction takes place in the presence of glutamine and ATP through an activated gamma-phospho-Glu-tRNA(Gln). The polypeptide is Glutamyl-tRNA(Gln) amidotransferase subunit C-3, mitochondrial (Culex quinquefasciatus (Southern house mosquito)).